A 269-amino-acid polypeptide reads, in one-letter code: Tryptophan synthase alpha chain (269 aa).

Catalysis depends on proton acceptor residues Glu-49 and Asp-60.

The protein belongs to the TrpA family. As to quaternary structure, tetramer of two alpha and two beta chains.

The enzyme catalyses (1S,2R)-1-C-(indol-3-yl)glycerol 3-phosphate + L-serine = D-glyceraldehyde 3-phosphate + L-tryptophan + H2O. It functions in the pathway amino-acid biosynthesis; L-tryptophan biosynthesis; L-tryptophan from chorismate: step 5/5. Functionally, the alpha subunit is responsible for the aldol cleavage of indoleglycerol phosphate to indole and glyceraldehyde 3-phosphate. This Delftia acidovorans (strain DSM 14801 / SPH-1) protein is Tryptophan synthase alpha chain.